We begin with the raw amino-acid sequence, 962 residues long: Glycine dehydrogenase (decarboxylating) (962 aa).

Lys709 is subject to N6-(pyridoxal phosphate)lysine.

It belongs to the GcvP family. As to quaternary structure, the glycine cleavage system is composed of four proteins: P, T, L and H. Requires pyridoxal 5'-phosphate as cofactor.

It carries out the reaction N(6)-[(R)-lipoyl]-L-lysyl-[glycine-cleavage complex H protein] + glycine + H(+) = N(6)-[(R)-S(8)-aminomethyldihydrolipoyl]-L-lysyl-[glycine-cleavage complex H protein] + CO2. Functionally, the glycine cleavage system catalyzes the degradation of glycine. The P protein binds the alpha-amino group of glycine through its pyridoxal phosphate cofactor; CO(2) is released and the remaining methylamine moiety is then transferred to the lipoamide cofactor of the H protein. The sequence is that of Glycine dehydrogenase (decarboxylating) from Shewanella baltica (strain OS195).